Reading from the N-terminus, the 553-residue chain is Cytokine-like nuclear factor N-PAC (553 aa).

The PWWP domain maps to 8–66; sequence LGDLVWGKLGRYPPWPGKIVNPPKDLKKPRGKKCFFVKFFGTEDHAWIKVEQLKPYHAH. Composition is skewed to basic and acidic residues over residues 92–145 and 162–182; these read RAKG…EGKK and RAQEQSPRKRGRPPKDEKDLT. The interval 92-188 is disordered; it reads RAKGKDQTSS…KDLTIPESST (97 aa). Ser-130 carries the post-translational modification Phosphoserine. Lys-135 participates in a covalent cross-link: Glycyl lysine isopeptide (Lys-Gly) (interchain with G-Cter in SUMO2). Ser-167 is subject to Phosphoserine. Residues 168-180 constitute a DNA-binding region (a.T hook); that stretch reads PRKRGRPPKDEKD. Glycyl lysine isopeptide (Lys-Gly) (interchain with G-Cter in SUMO2) cross-links involve residues Lys-176, Lys-179, Lys-201, and Lys-211. An interaction with histone H3 region spans residues 214 to 217; the sequence is DPHF. The interaction with KDM1B stretch occupies residues 216-225; that stretch reads HFHHFLLSQT. Residues Lys-227, Lys-237, Lys-240, and Lys-269 each participate in a glycyl lysine isopeptide (Lys-Gly) (interchain with G-Cter in SUMO2) cross-link. The interval 261–553 is dehydrogenase domain; that stretch reads GSITPTDKKI…MSAVYRAYIH (293 aa). Position 271–285 (271–285) interacts with NAD(+); it reads GFLGLGLMGSGIVSN. Residue Lys-302 forms a Glycyl lysine isopeptide (Lys-Gly) (interchain with G-Cter in SUMO2) linkage. NAD(+) is bound by residues Thr-362 and Lys-505. Ser-540 is subject to Phosphoserine.

The protein belongs to the HIBADH-related family. NP60 subfamily. Homotetramere. Interacts with MAPK14. Interacts with KDM1B at nucleosomes; this interaction stimulates H3K4me1 and H3K4me2 demethylation. Binds to mononucleosomes. Interacts with GATA4; the interaction is required for a synergistic activation of GATA4 target genes transcription.

Its subcellular location is the nucleus. The protein localises to the chromosome. In terms of biological role, cytokine-like nuclear factor with chromatin gene reader activity involved in chromatin modification and regulation of gene expression. Acts as a nucleosome-destabilizing factor that is recruited to genes during transcriptional activation. Recognizes and binds histone H3 without a preference for specific epigenetic markers and also binds DNA. Interacts with KDM1B and promotes its histone demethylase activity by facilitating the capture of H3 tails, they form a multifunctional enzyme complex that modifies transcribed chromatin and facilitates Pol II transcription through nucleosomes. Stimulates the acetylation of 'Lys-56' of nucleosomal histone H3 (H3K56ac) by EP300. With GATA4, co-binds a defined set of heart development genes and coregulates their expression during cardiomyocyte differentiation. Regulates p38 MAP kinase activity by mediating stress activation of MAPK14/p38alpha and specifically regulating MAPK14 signaling. Indirectly promotes phosphorylation of MAPK14 and activation of ATF2. The phosphorylation of MAPK14 requires upstream activity of MAP2K4 and MAP2K6. The chain is Cytokine-like nuclear factor N-PAC (GLYR1) from Pongo abelii (Sumatran orangutan).